The sequence spans 361 residues: 3-dehydroquinate synthase (361 aa).

Residues 107-111 (GVIGD), 131-132 (TS), K144, and K153 contribute to the NAD(+) site. Residues E186, H251, and H268 each coordinate Zn(2+).

This sequence belongs to the sugar phosphate cyclases superfamily. Dehydroquinate synthase family. It depends on NAD(+) as a cofactor. Co(2+) serves as cofactor. Requires Zn(2+) as cofactor.

It localises to the cytoplasm. The enzyme catalyses 7-phospho-2-dehydro-3-deoxy-D-arabino-heptonate = 3-dehydroquinate + phosphate. It functions in the pathway metabolic intermediate biosynthesis; chorismate biosynthesis; chorismate from D-erythrose 4-phosphate and phosphoenolpyruvate: step 2/7. Its function is as follows. Catalyzes the conversion of 3-deoxy-D-arabino-heptulosonate 7-phosphate (DAHP) to dehydroquinate (DHQ). This Synechocystis sp. (strain ATCC 27184 / PCC 6803 / Kazusa) protein is 3-dehydroquinate synthase.